Here is a 75-residue protein sequence, read N- to C-terminus: Small ribosomal subunit protein bS18 (75 aa).

A compositionally biased stretch (basic residues) spans 1–11 (MAAKPFFRRRK). The tract at residues 1-21 (MAAKPFFRRRKTDPFEGENAP) is disordered.

It belongs to the bacterial ribosomal protein bS18 family. In terms of assembly, part of the 30S ribosomal subunit. Forms a tight heterodimer with protein bS6.

Its function is as follows. Binds as a heterodimer with protein bS6 to the central domain of the 16S rRNA, where it helps stabilize the platform of the 30S subunit. This is Small ribosomal subunit protein bS18 from Jannaschia sp. (strain CCS1).